We begin with the raw amino-acid sequence, 175 residues long: Co-chaperone protein HscB homolog (175 aa).

Residues serine 7–leucine 79 form the J domain.

The protein belongs to the HscB family. Interacts with HscA and stimulates its ATPase activity.

Its function is as follows. Co-chaperone involved in the maturation of iron-sulfur cluster-containing proteins. Seems to help targeting proteins to be folded toward HscA. This Paraburkholderia phytofirmans (strain DSM 17436 / LMG 22146 / PsJN) (Burkholderia phytofirmans) protein is Co-chaperone protein HscB homolog.